A 485-amino-acid polypeptide reads, in one-letter code: Subtilisin-like protease 1 (485 aa).

The first 19 residues, 1 to 19, serve as a signal peptide directing secretion; sequence MGIFRFISISLAAVSAANA. A propeptide spanning residues 20–116 is cleaved from the precursor; the sequence is GHILSMGHAK…VEPDTTITIH (97 aa). Residues 34 to 116 enclose the Inhibitor I9 domain; the sequence is SYIVVMKDGT…VEPDTTITIH (83 aa). In terms of domain architecture, Peptidase S8 spans 126–400; that stretch reads SWGLARISSQ…NILINNGDAK (275 aa). Residues Asp-158 and His-190 each act as charge relay system in the active site. Asn-251 is a glycosylation site (N-linked (GlcNAc...) asparagine). Ser-345 (charge relay system) is an active-site residue. Polar residues predominate over residues 377-394; sequence GTSSVTNPGPGTRTNILI. The disordered stretch occupies residues 377-462; sequence GTSSVTNPGP…HTPFPNDDFN (86 aa). Residues 409-418 show a composition bias toward pro residues; that stretch reads PSQPPKPSQP. Low complexity predominate over residues 419-428; sequence SKPQQPSEPQ. Residues 433-455 are compositionally biased toward pro residues; it reads PQEPAPGQPAPAPAPVPQHPHTP.

This sequence belongs to the peptidase S8 family.

Its subcellular location is the secreted. Secreted subtilisin-like serine protease with keratinolytic activity that contributes to pathogenicity. The chain is Subtilisin-like protease 1 (SUB1) from Arthroderma otae (Microsporum canis).